The primary structure comprises 117 residues: Large ribosomal subunit protein bL20 (117 aa).

This sequence belongs to the bacterial ribosomal protein bL20 family.

Binds directly to 23S ribosomal RNA and is necessary for the in vitro assembly process of the 50S ribosomal subunit. It is not involved in the protein synthesizing functions of that subunit. The chain is Large ribosomal subunit protein bL20 (rplT) from Rickettsia prowazekii (strain Madrid E).